The primary structure comprises 874 residues: Alanine--tRNA ligase (874 aa).

Zn(2+) contacts are provided by histidine 563, histidine 567, cysteine 665, and histidine 669.

Belongs to the class-II aminoacyl-tRNA synthetase family. It depends on Zn(2+) as a cofactor.

Its subcellular location is the cytoplasm. It carries out the reaction tRNA(Ala) + L-alanine + ATP = L-alanyl-tRNA(Ala) + AMP + diphosphate. Catalyzes the attachment of alanine to tRNA(Ala) in a two-step reaction: alanine is first activated by ATP to form Ala-AMP and then transferred to the acceptor end of tRNA(Ala). Also edits incorrectly charged Ser-tRNA(Ala) and Gly-tRNA(Ala) via its editing domain. This Haemophilus ducreyi (strain 35000HP / ATCC 700724) protein is Alanine--tRNA ligase.